A 227-amino-acid polypeptide reads, in one-letter code: Fibrillarin-like rRNA/tRNA 2'-O-methyltransferase (227 aa).

S-adenosyl-L-methionine contacts are provided by residues 86–87 (TT), 105–106 (EF), 130–131 (DA), and 150–153 (DVAQ).

This sequence belongs to the methyltransferase superfamily. Fibrillarin family. In terms of assembly, interacts with nop5. Component of box C/D small ribonucleoprotein (sRNP) particles that contain rpl7ae, FlpA and nop5, plus a guide RNA. These sRNP particles form homodimers, giving rise to an asymmetric holoenzyme.

Functionally, involved in pre-rRNA and tRNA processing. Utilizes the methyl donor S-adenosyl-L-methionine to catalyze the site-specific 2'-hydroxyl methylation of ribose moieties in rRNA and tRNA. Site specificity is provided by a guide RNA that base pairs with the substrate. Methylation occurs at a characteristic distance from the sequence involved in base pairing with the guide RNA. The chain is Fibrillarin-like rRNA/tRNA 2'-O-methyltransferase from Pyrococcus furiosus (strain ATCC 43587 / DSM 3638 / JCM 8422 / Vc1).